We begin with the raw amino-acid sequence, 500 residues long: Hepatic triacylglycerol lipase (500 aa).

The N-terminal stretch at 1–21 (MENPLCVSIFLFYCILIQSSA) is a signal peptide. Residues 23-44 (GQSLGPESFGRRSRAAETNKTP) form a disordered region. Residues Asn67 and Asn78 are each glycosylated (N-linked (GlcNAc...) asparagine). The Nucleophile role is filled by Ser168. Asp194 (charge relay system) is an active-site residue. Residues 254 to 277 (CHFLELYKHFAKHGLNAITRTVKC) are essential for determining substrate specificity. The Charge relay system role is filled by His279. The PLAT domain maps to 353–487 (YHYQFKIRFI…HPAREKTFVR (135 aa)). N-linked (GlcNAc...) asparagine glycans are attached at residues Asn363 and Asn398.

Belongs to the AB hydrolase superfamily. Lipase family. In terms of assembly, homodimer.

The protein localises to the secreted. The enzyme catalyses a triacylglycerol + H2O = a diacylglycerol + a fatty acid + H(+). The catalysed reaction is a 1-acyl-sn-glycero-3-phosphocholine + H2O = sn-glycerol 3-phosphocholine + a fatty acid + H(+). It carries out the reaction a 1,2-diacyl-sn-glycero-3-phosphocholine + H2O = a 2-acyl-sn-glycero-3-phosphocholine + a fatty acid + H(+). It catalyses the reaction 1,2,3-tri-(9Z-octadecenoyl)-glycerol + H2O = di-(9Z)-octadecenoylglycerol + (9Z)-octadecenoate + H(+). The enzyme catalyses 1,2-di-(9Z-octadecenoyl)-sn-glycero-3-phosphocholine + H2O = (9Z-octadecenoyl)-sn-glycero-3-phosphocholine + (9Z)-octadecenoate + H(+). The catalysed reaction is 1,2,3-tributanoylglycerol + H2O = dibutanoylglycerol + butanoate + H(+). It carries out the reaction 1,2-dihexadecanoyl-sn-glycero-3-phosphocholine + H2O = hexadecanoyl-sn-glycero-3-phosphocholine + hexadecanoate + H(+). It catalyses the reaction 1,2-di-(9Z-octadecenoyl)-sn-glycerol + H2O = 2-(9Z-octadecenoyl)-glycerol + (9Z)-octadecenoate + H(+). The enzyme catalyses 1,2,3-tri-(9Z-octadecenoyl)-glycerol + H2O = 2,3-di-(9Z)-octadecenoyl-sn-glycerol + (9Z)-octadecenoate + H(+). The catalysed reaction is 1-(9Z-octadecenoyl)-sn-glycero-3-phospho-L-serine + H2O = sn-glycero-3-phospho-L-serine + (9Z)-octadecenoate + H(+). It carries out the reaction 1-hexadecanoyl-sn-glycero-3-phosphocholine + H2O = sn-glycerol 3-phosphocholine + hexadecanoate + H(+). It catalyses the reaction 1,3-di-(9Z-octadecenoyl)-glycerol + H2O = 3-(9Z-octadecenoyl)-sn-glycerol + (9Z)-octadecenoate + H(+). In terms of biological role, catalyzes the hydrolysis of triglycerides and phospholipids present in circulating plasma lipoproteins, including chylomicrons, intermediate density lipoproteins (IDL), low density lipoproteins (LDL) of large size and high density lipoproteins (HDL), releasing free fatty acids (FFA) and smaller lipoprotein particles. Also exhibits lysophospholipase activity. Can hydrolyze both neutral lipid and phospholipid substrates but shows a greater binding affinity for neutral lipid substrates than phospholipid substrates. In native LDL, preferentially hydrolyzes the phosphatidylcholine species containing polyunsaturated fatty acids at sn-2 position. The sequence is that of Hepatic triacylglycerol lipase (LIPC) from Bos taurus (Bovine).